A 623-amino-acid chain; its full sequence is AM-toxin biosynthesis protein 12-2 (623 aa).

The segment at 110–129 is disordered; that stretch reads TIPGTSQAKNTEPDHQASGL.

The protein operates within mycotoxin biosynthesis. In terms of biological role, part of the gene clusters that mediate the biosynthesis of AM-toxins, host-selective toxins (HSTs) causing Alternaria blotch on apple, a worldwide distributed disease. AM-toxins are cyclic depsipeptides containing the 3 residues 2-hydroxy-isovaleric acid (2-HIV), dehydroalanine, L-alanine which are common for all 3 AM-toxins I to III. The fourth precursor is L-alpha-amino-methoxyphenyl-valeric acid (L-Amv) for AM-toxin I, L-alpha-amino-phenyl-valeric acid (L-Apv) for AM-toxin II, and L-alpha-amino-hydroxyphenyl-valeric acid (L-Ahv) for AM-toxin III. AM-toxins have two target sites for affecting susceptible apple cells; they cause invagination of the plasma membrane and electrolyte loss and chloroplast disorganization. The non-ribosomal peptide synthetase AMT1 contains 4 catalytic modules and is responsible for activation of each residue in AM-toxin. The aldo-keto reductase AMT2 catalyzes the conversion of 2-keto-isovaleric acid (2-KIV) to 2-hydroxy-isovaleric acid (2-HIV), one of the precursor residues incorporated by AMT1 during AM-toxin biosynthesis, by reduction of its ketone to an alcohol. The cytochrome P450 monooxygenase AMT3 and the thioesterase AMT4 are also important for AM-toxin production, but their exact function within the AM-toxin biosynthesis are not known yet. Up to 21 proteins (including AMT1 to AMT4) are predicted to be involved in AM-toxin biosynthesis since their expression ishighly up-regulated in AM-toxin-producing cultures. The chain is AM-toxin biosynthesis protein 12-2 from Alternaria alternata (Alternaria rot fungus).